The following is a 333-amino-acid chain: MELIVKEESKTDYNYGSDPYNRDIKTLLNTGLVVIDKPSGPTSHEVAAWVRNMLNLVKAGHGGTLDPKVTGALPVALGNTTKCVPIWHIPPKEYVCLMHLHDDAELVDIENIFKEFTGRIHQRPPLKAAVKRSLRIRKIYEIEILEIDGRDILFRTKCQSGTYLRKLVDDMGEALGTSAHMQELRRTISGPFYENEAVYLQDLLDAYIFWKEDGNEEELRKIVKPLEYGLQHLKKIIIKDSAVDAVCHGATLYSSGISKIEKGLGTDEVVLIETLKGEAVAVGKPLMNTKDMLKTEEGEVVEITRVIMEPGIYPRIWKKRNKNDKSKPELKKK.

The active-site Nucleophile is the aspartate 66. The 76-residue stretch at 233–308 (LKKIIIKDSA…EVVEITRVIM (76 aa)) folds into the PUA domain.

Belongs to the pseudouridine synthase TruB family. Type 2 subfamily.

The catalysed reaction is uridine(55) in tRNA = pseudouridine(55) in tRNA. Functionally, could be responsible for synthesis of pseudouridine from uracil-55 in the psi GC loop of transfer RNAs. In Methanococcus maripaludis (strain DSM 14266 / JCM 13030 / NBRC 101832 / S2 / LL), this protein is Probable tRNA pseudouridine synthase B.